We begin with the raw amino-acid sequence, 376 residues long: MNFFKRLRLHTRLLLRSKFVLISLILLLNLGLLLGIQIYRDPAFPGSLISSAAYEFGLHKHGPYYNDNVDDLKRYTFMGLLTLPTSEHDVYFNATRVLVYKLKHHPETKSKYPVHVLVMKGVDEWKIERLRLDGAEIIMVDQIKTEDLIESGLSIGMGSYRYQYMFTKLSVFEQTQFDKVCILDSDLLVLKNMDDIFDTPYVYESPAEPDMFSFPIFKKPDDEEDYQFSDNFDAYGAPRSEFYPYLLGACDDRNPGHATPPEESETFNAGLMLVHPSSLHMHRIKKIARYPYMYDDARMMEQSLLNLAYNKYGWFPWTRLDFSYNGVWVTEEDLPYLRAAHGKFWEYDNTEFPQILTAEWHKAFGELLAFHDYVVE.

Residues 19–39 (FVLISLILLLNLGLLLGIQIY) traverse the membrane as a helical segment.

It to S.pombe SpAC5H10.12c.

The protein localises to the cytoplasm. It localises to the nucleus. Its subcellular location is the membrane. This is an uncharacterized protein from Schizosaccharomyces pombe (strain 972 / ATCC 24843) (Fission yeast).